Consider the following 1177-residue polypeptide: uncharacterized protein (1177 aa).

A signal peptide spans 1 to 26 (MKKLLKKSKFWWFLLCGLSVSTILVA). A lipid anchor (N-palmitoyl cysteine) is attached at C27. C27 is lipidated: S-diacylglycerol cysteine.

The protein belongs to the MG307/MG309/MG338 family.

Its subcellular location is the cell membrane. This is an uncharacterized protein from Mycoplasma genitalium (strain ATCC 33530 / DSM 19775 / NCTC 10195 / G37) (Mycoplasmoides genitalium).